The primary structure comprises 302 residues: Cardiolipin synthase (CMP-forming) (302 aa).

The tract at residues 65 to 84 is disordered; the sequence is PRTHCSGAGKAAPEPAAGGD. The segment covering 71–84 has biased composition (low complexity); that stretch reads GAGKAAPEPAAGGD. A run of 5 helical transmembrane segments spans residues 109 to 129, 133 to 153, 190 to 212, 250 to 270, and 271 to 289; these read IPNL…YLIL, FNVA…DGFI, IPVP…VFYV, LILV…SIYL, and QILW…YSYY.

The protein belongs to the CDP-alcohol phosphatidyltransferase class-I family. Requires a divalent metal cation as cofactor.

It is found in the mitochondrion inner membrane. It carries out the reaction a CDP-1,2-diacyl-sn-glycerol + a 1,2-diacyl-sn-glycero-3-phospho-(1'-sn-glycerol) = a cardiolipin + CMP + H(+). Functionally, catalyzes the synthesis of cardiolipin (CL) (diphosphatidylglycerol) by specifically transferring a phosphatidyl group from CDP-diacylglycerol to phosphatidylglycerol (PG). CL is a key phospholipid in mitochondrial membranes and plays important roles in maintaining the functional integrity and dynamics of mitochondria under both optimal and stress conditions. The chain is Cardiolipin synthase (CMP-forming) (Crls1) from Rattus norvegicus (Rat).